A 359-amino-acid polypeptide reads, in one-letter code: uncharacterized protein (359 aa).

In terms of domain architecture, PINc spans 163–275 (VVDTSCIIDG…SKVANLQKVQ (113 aa)). Residues Asp165 and Asp244 each coordinate Mg(2+). Positions 289-350 (IYLPGDSLEL…LQTSAGRMIF (62 aa)) constitute a TRAM domain.

Belongs to the ycf81 family. It in the central section; belongs to the PINc/VapC protein family. The cofactor is Mg(2+).

In terms of biological role, an RNase. This is an uncharacterized protein from Synechocystis sp. (strain ATCC 27184 / PCC 6803 / Kazusa).